The following is a 75-amino-acid chain: Small ribosomal subunit protein bS16 (75 aa).

Belongs to the bacterial ribosomal protein bS16 family.

In Campylobacter lari (strain RM2100 / D67 / ATCC BAA-1060), this protein is Small ribosomal subunit protein bS16.